Consider the following 401-residue polypeptide: 8-amino-7-oxononanoate synthase (401 aa).

Residue arginine 24 coordinates substrate. 111 to 112 (GF) contributes to the pyridoxal 5'-phosphate binding site. Histidine 137 is a binding site for substrate. Serine 183, histidine 211, and threonine 240 together coordinate pyridoxal 5'-phosphate. N6-(pyridoxal phosphate)lysine is present on lysine 243. Threonine 357 lines the substrate pocket.

This sequence belongs to the class-II pyridoxal-phosphate-dependent aminotransferase family. BioF subfamily. Homodimer. Requires pyridoxal 5'-phosphate as cofactor.

The catalysed reaction is 6-carboxyhexanoyl-[ACP] + L-alanine + H(+) = (8S)-8-amino-7-oxononanoate + holo-[ACP] + CO2. Its pathway is cofactor biosynthesis; biotin biosynthesis. Catalyzes the decarboxylative condensation of pimeloyl-[acyl-carrier protein] and L-alanine to produce 8-amino-7-oxononanoate (AON), [acyl-carrier protein], and carbon dioxide. In Xylella fastidiosa (strain M23), this protein is 8-amino-7-oxononanoate synthase.